The primary structure comprises 68 residues: Venom-like beta-defensin (68 aa).

Positions 1 to 24 (MRLLILFLAVVTLLSLAGPGSAEV) are cleaved as a signal peptide. 3 disulfide bridges follow: C33–C60, C40–C54, and C47–C61.

Highly expressed in intestine, liver and spleen and expressed at lower levels in brain, kidney, lung, testis and venom gland.

The protein localises to the secreted. Its function is as follows. Potent antimicrobial peptide that displays activity against S.aureus and P.aeruginosa. Does not inhibit growth of E.coli. The polypeptide is Venom-like beta-defensin (Ornithorhynchus anatinus (Duckbill platypus)).